The primary structure comprises 406 residues: Arginine deiminase (406 aa).

The Amidino-cysteine intermediate role is filled by Cys396.

Belongs to the arginine deiminase family.

The protein resides in the cytoplasm. It carries out the reaction L-arginine + H2O = L-citrulline + NH4(+). The protein operates within amino-acid degradation; L-arginine degradation via ADI pathway; carbamoyl phosphate from L-arginine: step 1/2. This is Arginine deiminase from Aliivibrio salmonicida (strain LFI1238) (Vibrio salmonicida (strain LFI1238)).